A 365-amino-acid chain; its full sequence is D-alanine--D-alanine ligase (365 aa).

The region spanning 156–360 (KKLMAAEGLP…YAQLLDNLIE (205 aa)) is the ATP-grasp domain. 183-238 (KRELGLPVFVKPARGGSSIGISRVADWSEWDAALSLAREHDSKVIVEAEIVGVEVE) is a binding site for ATP. D315, E327, and N329 together coordinate Mg(2+).

The protein belongs to the D-alanine--D-alanine ligase family. Mg(2+) serves as cofactor. Mn(2+) is required as a cofactor.

It is found in the cytoplasm. The catalysed reaction is 2 D-alanine + ATP = D-alanyl-D-alanine + ADP + phosphate + H(+). Its pathway is cell wall biogenesis; peptidoglycan biosynthesis. In terms of biological role, cell wall formation. The protein is D-alanine--D-alanine ligase of Corynebacterium diphtheriae (strain ATCC 700971 / NCTC 13129 / Biotype gravis).